A 615-amino-acid chain; its full sequence is ATP-dependent zinc metalloprotease FtsH (615 aa).

Residues 1–8 (MAMNKDKP) lie on the Cytoplasmic side of the membrane. The chain crosses the membrane as a helical span at residues 9–29 (WTLYLLAVGLAVLAAVQFGLF). Topologically, residues 30–104 (SQPAVQAIPY…FSGVVEDNTV (75 aa)) are periplasmic. The chain crosses the membrane as a helical span at residues 105–125 (ATVMGALMPLLMLLALWYFLF). At 126-615 (HGLGQKQGLG…ATYVLVDATK (490 aa)) the chain is on the cytoplasmic side. Residue 198–205 (GPPGTGKT) coordinates ATP. A Zn(2+)-binding site is contributed by His-420. The active site involves Glu-421. Zn(2+) is bound by residues His-424 and Asp-497.

It in the central section; belongs to the AAA ATPase family. The protein in the C-terminal section; belongs to the peptidase M41 family. In terms of assembly, homohexamer. Requires Zn(2+) as cofactor.

It is found in the cell inner membrane. Acts as a processive, ATP-dependent zinc metallopeptidase for both cytoplasmic and membrane proteins. Plays a role in the quality control of integral membrane proteins. This is ATP-dependent zinc metalloprotease FtsH from Pseudomonas putida (strain ATCC 700007 / DSM 6899 / JCM 31910 / BCRC 17059 / LMG 24140 / F1).